Reading from the N-terminus, the 209-residue chain is Large ribosomal subunit protein uL3 (209 aa).

Residues 141–163 are disordered; the sequence is RAVGSMGASSDPSRTFKNKRMPG.

The protein belongs to the universal ribosomal protein uL3 family. Part of the 50S ribosomal subunit. Forms a cluster with proteins L14 and L19.

One of the primary rRNA binding proteins, it binds directly near the 3'-end of the 23S rRNA, where it nucleates assembly of the 50S subunit. The chain is Large ribosomal subunit protein uL3 from Clostridium botulinum (strain Langeland / NCTC 10281 / Type F).